The chain runs to 1266 residues: Rho GTPase-activating protein 29 (1266 aa).

Phosphoserine is present on residues serine 166, serine 171, serine 174, and serine 185. In terms of domain architecture, F-BAR spans 187-457 (IELDNLLLKN…SAKLYDPGQE (271 aa)). A coiled-coil region spans residues 291–413 (RKNEMEKQRK…EILTQLRTLV (123 aa)). A phosphoserine mark is found at serine 496, serine 516, and serine 549. Residues 538–556 (SESTGGSSESRSLDSESIS) show a composition bias toward low complexity. The segment at 538-596 (SESTGGSSESRSLDSESISPGDFHRKLPRTPSSGTMSSADDLDEREPPSPSEAGPNSLG) is disordered. The segment at 609-654 (THKFRKLRSPTKCRDCEGIVMFPGVECEECLLVCHRKCLENLVIVC) adopts a Phorbol-ester/DAG-type zinc-finger fold. Residues 668-883 (AEFIQVAKKE…FLITYAQKIF (216 aa)) form the Rho-GAP domain. 3 positions are modified to phosphoserine: serine 915, serine 951, and serine 1023. Disordered regions lie at residues 1033–1054 (AGSP…KFGK), 1114–1153 (VSTG…DSCP), and 1222–1248 (VQTS…QRPR). Positions 1115–1127 (STGNNRGHSSGAA) are enriched in polar residues. Positions 1132–1148 (AHADPARSARDTSEHSS) are enriched in basic and acidic residues. Phosphoserine occurs at positions 1149 and 1151. The interaction with PTPN13/PTPL1 stretch occupies residues 1263-1266 (PQFV).

Interacts with PTPN13/PTPL1. Interacts with RAP2A via its coiled coil domain. Interacts with RASIP1.

In terms of biological role, GTPase activator for the Rho-type GTPases by converting them to an inactive GDP-bound state. Has strong activity toward RHOA, and weaker activity toward RAC1 and CDC42. May act as a specific effector of RAP2A to regulate Rho. In concert with RASIP1, suppresses RhoA signaling and dampens ROCK and MYH9 activities in endothelial cells and plays an essential role in blood vessel tubulogenesis. This Rattus norvegicus (Rat) protein is Rho GTPase-activating protein 29 (Arhgap29).